The chain runs to 358 residues: Alanine racemase (358 aa).

Catalysis depends on K35, which acts as the Proton acceptor; specific for D-alanine. K35 carries the N6-(pyridoxal phosphate)lysine modification. A substrate-binding site is contributed by R130. The active-site Proton acceptor; specific for L-alanine is the Y255. M303 is a binding site for substrate.

The protein belongs to the alanine racemase family. Pyridoxal 5'-phosphate serves as cofactor.

It catalyses the reaction L-alanine = D-alanine. Its pathway is amino-acid biosynthesis; D-alanine biosynthesis; D-alanine from L-alanine: step 1/1. In terms of biological role, catalyzes the interconversion of L-alanine and D-alanine. May also act on other amino acids. The sequence is that of Alanine racemase (alr) from Shewanella woodyi (strain ATCC 51908 / MS32).